A 1177-amino-acid chain; its full sequence is DNA-directed RNA polymerase subunit beta' (1177 aa).

Residues Cys-60, Cys-62, Cys-75, and Cys-78 each contribute to the Zn(2+) site. Asp-450, Asp-452, and Asp-454 together coordinate Mg(2+). The Zn(2+) site is built by Cys-795, Cys-869, Cys-876, and Cys-879.

This sequence belongs to the RNA polymerase beta' chain family. As to quaternary structure, the RNAP catalytic core consists of 2 alpha, 1 beta, 1 beta' and 1 omega subunit. When a sigma factor is associated with the core the holoenzyme is formed, which can initiate transcription. Mg(2+) is required as a cofactor. Requires Zn(2+) as cofactor.

The catalysed reaction is RNA(n) + a ribonucleoside 5'-triphosphate = RNA(n+1) + diphosphate. In terms of biological role, DNA-dependent RNA polymerase catalyzes the transcription of DNA into RNA using the four ribonucleoside triphosphates as substrates. The sequence is that of DNA-directed RNA polymerase subunit beta' from Clostridium botulinum (strain Eklund 17B / Type B).